A 174-amino-acid chain; its full sequence is MNYFELFKFSPAFDIDTAVLAERYRELQRAVHPDKFANDTEQQRLLSVQRTAQVNDGYQTLKDPIRRAEHMLSLRGIDLSHETTTVKDTAFLMQQMEWREALEDIRDSADPQESIDELYDSFAAYRTKLTKLLTAQLSSGSEDDALLAADQVRKLKFMAKLHDELTRIEDALLD.

Residues 2 to 74 (NYFELFKFSP…IRRAEHMLSL (73 aa)) enclose the J domain.

Belongs to the HscB family. As to quaternary structure, interacts with HscA and stimulates its ATPase activity.

Functionally, co-chaperone involved in the maturation of iron-sulfur cluster-containing proteins. Seems to help targeting proteins to be folded toward HscA. In Shewanella sp. (strain ANA-3), this protein is Co-chaperone protein HscB homolog.